A 313-amino-acid chain; its full sequence is 3'-5' exoribonuclease YhaM (313 aa).

The OB DNA-binding region spans 22–90 (SSVKGTASNG…QLKIRQIRQA (69 aa)). Positions 163 to 279 (HVVSMLRLAK…LHQIDLMDAS (117 aa)) constitute an HD domain.

It belongs to the YhaM family.

In terms of biological role, shows a 3'-5' exoribonuclease activity. This chain is 3'-5' exoribonuclease YhaM, found in Listeria innocua serovar 6a (strain ATCC BAA-680 / CLIP 11262).